A 192-amino-acid chain; its full sequence is Protein Syd (192 aa).

Belongs to the Syd family.

It is found in the cell inner membrane. In terms of biological role, interacts with the SecY protein in vivo. May bind preferentially to an uncomplexed state of SecY, thus functioning either as a chelating agent for excess SecY in the cell or as a regulatory factor that negatively controls the translocase function. This Hahella chejuensis (strain KCTC 2396) protein is Protein Syd.